The following is a 209-amino-acid chain: Dual-specificity protein phosphatase SDP1 (209 aa).

A compositionally biased stretch (polar residues) spans 1-11 (MNIYTSPTRTP). The interval 1 to 43 (MNIYTSPTRTPNIAPKSGQRPSLPMLATDERSTDKESPNEDRE) is disordered. Over residues 28-43 (TDERSTDKESPNEDRE) the composition is skewed to basic and acidic residues. A disulfide bridge connects residues cysteine 47 and cysteine 142. Residues 59 to 196 (GPLLVLPEKI…LMEWEVALNA (138 aa)) enclose the Tyrosine-protein phosphatase domain. Residue histidine 111 participates in 4-O-phospho-L-tyrosine binding. Residue cysteine 140 is the Phosphocysteine intermediate of the active site.

It belongs to the protein-tyrosine phosphatase family. Non-receptor class dual specificity subfamily.

The enzyme catalyses O-phospho-L-tyrosyl-[protein] + H2O = L-tyrosyl-[protein] + phosphate. Functionally, mediates dephosphorylation of MAPK substrates such as SLT2, acquiring enhanced catalytic activity under oxidative conditions. The polypeptide is Dual-specificity protein phosphatase SDP1 (SDP1) (Saccharomyces cerevisiae (strain ATCC 204508 / S288c) (Baker's yeast)).